We begin with the raw amino-acid sequence, 877 residues long: Putative ankyrin repeat protein R748 (877 aa).

ANK repeat units follow at residues 44 to 74, 79 to 109, 115 to 145, 202 to 231, 243 to 272, and 282 to 311; these read IRHI…TINV, QNNT…NINY, IGIS…AIQQ, MGYR…SINE, NNND…PIHM, and LVPT…SIQA. The segment at 525–579 is disordered; sequence DSDEDPVCDSNESDNSNDINNHVKSDNKLNSSNDYYDEDDSEDNYNNQSDDEPLV. Residues 533 to 544 are compositionally biased toward low complexity; it reads DSNESDNSNDIN.

In Acanthamoeba polyphaga mimivirus (APMV), this protein is Putative ankyrin repeat protein R748.